The chain runs to 80 residues: Exodeoxyribonuclease 7 small subunit (80 aa).

It belongs to the XseB family. In terms of assembly, heterooligomer composed of large and small subunits.

Its subcellular location is the cytoplasm. The catalysed reaction is Exonucleolytic cleavage in either 5'- to 3'- or 3'- to 5'-direction to yield nucleoside 5'-phosphates.. Functionally, bidirectionally degrades single-stranded DNA into large acid-insoluble oligonucleotides, which are then degraded further into small acid-soluble oligonucleotides. In Vibrio atlanticus (strain LGP32) (Vibrio splendidus (strain Mel32)), this protein is Exodeoxyribonuclease 7 small subunit.